Reading from the N-terminus, the 189-residue chain is NADH-quinone oxidoreductase subunit B (189 aa).

The [4Fe-4S] cluster site is built by cysteine 39, cysteine 40, cysteine 104, and cysteine 135.

This sequence belongs to the complex I 20 kDa subunit family. As to quaternary structure, NDH-1 is composed of 14 different subunits. Subunits NuoB, C, D, E, F, and G constitute the peripheral sector of the complex. [4Fe-4S] cluster serves as cofactor.

Its subcellular location is the cell inner membrane. The enzyme catalyses a quinone + NADH + 5 H(+)(in) = a quinol + NAD(+) + 4 H(+)(out). In terms of biological role, NDH-1 shuttles electrons from NADH, via FMN and iron-sulfur (Fe-S) centers, to quinones in the respiratory chain. The immediate electron acceptor for the enzyme in this species is believed to be a menaquinone. Couples the redox reaction to proton translocation (for every two electrons transferred, four hydrogen ions are translocated across the cytoplasmic membrane), and thus conserves the redox energy in a proton gradient. This chain is NADH-quinone oxidoreductase subunit B, found in Chlorobaculum tepidum (strain ATCC 49652 / DSM 12025 / NBRC 103806 / TLS) (Chlorobium tepidum).